The primary structure comprises 286 residues: MNDAVTLRSGCKVNLDLHITSRRDDGYHEIDSLFLPLDEPHDELVVTVGDAPGITVTCAIQGIDPTRNTVTRAYDAYAEASGFRPPLRVELRKGVPHGAGLGGGSANAAAILNHLESIAPHPLGRETLCRLAARIGADVPFFIHAVPCRASGIGEIITPVAWPYKGFTLLLACPQVQVSTAWAYGALDAAEEKQLRVRGCLTTGGVADRNSFSRESWLHNSFEPVVFASHPELRSLKEALLRHGAAAALMSGSGASVFALFRRREDAEAAFEQLKGHDIRVYQHLL.

Residue lysine 12 is part of the active site. 96–106 contacts ATP; that stretch reads PHGAGLGGGSA. Aspartate 138 is a catalytic residue.

It belongs to the GHMP kinase family. IspE subfamily.

The catalysed reaction is 4-CDP-2-C-methyl-D-erythritol + ATP = 4-CDP-2-C-methyl-D-erythritol 2-phosphate + ADP + H(+). It functions in the pathway isoprenoid biosynthesis; isopentenyl diphosphate biosynthesis via DXP pathway; isopentenyl diphosphate from 1-deoxy-D-xylulose 5-phosphate: step 3/6. Functionally, catalyzes the phosphorylation of the position 2 hydroxy group of 4-diphosphocytidyl-2C-methyl-D-erythritol. This Nitratidesulfovibrio vulgaris (strain DP4) (Desulfovibrio vulgaris) protein is 4-diphosphocytidyl-2-C-methyl-D-erythritol kinase.